A 267-amino-acid polypeptide reads, in one-letter code: 4-hydroxy-tetrahydrodipicolinate reductase (267 aa).

Residues 8 to 13 (GAAGRM), glutamate 34, 98 to 100 (GST), and 122 to 125 (APNM) each bind NAD(+). Histidine 155 functions as the Proton donor/acceptor in the catalytic mechanism. Histidine 156 lines the (S)-2,3,4,5-tetrahydrodipicolinate pocket. Catalysis depends on lysine 159, which acts as the Proton donor. 165 to 166 (GT) contributes to the (S)-2,3,4,5-tetrahydrodipicolinate binding site.

The protein belongs to the DapB family.

It is found in the cytoplasm. The catalysed reaction is (S)-2,3,4,5-tetrahydrodipicolinate + NAD(+) + H2O = (2S,4S)-4-hydroxy-2,3,4,5-tetrahydrodipicolinate + NADH + H(+). It catalyses the reaction (S)-2,3,4,5-tetrahydrodipicolinate + NADP(+) + H2O = (2S,4S)-4-hydroxy-2,3,4,5-tetrahydrodipicolinate + NADPH + H(+). It functions in the pathway amino-acid biosynthesis; L-lysine biosynthesis via DAP pathway; (S)-tetrahydrodipicolinate from L-aspartate: step 4/4. Its function is as follows. Catalyzes the conversion of 4-hydroxy-tetrahydrodipicolinate (HTPA) to tetrahydrodipicolinate. The sequence is that of 4-hydroxy-tetrahydrodipicolinate reductase from Syntrophotalea carbinolica (strain DSM 2380 / NBRC 103641 / GraBd1) (Pelobacter carbinolicus).